A 292-amino-acid chain; its full sequence is MAFPPSAGFTWISKTHNDTYPTITAAKCKQHGRAVFVTGASKGIGRVTAVAFAQAGAPSLALGARSSLDAAETAVLDAAKSAGHPPPQVLKLTLDVADEQSVADAAARVERAFGRLDILVNNAGRVEKWVPLAETDPKSWWATWEVNLKGTYLMTRAMLPLLLKGGEKTIVNMNSIGAHLTRPGASAYQTGKLAMLRLTQFTCVEYAAQGVLAFAIHPGAVDTELASNLPEDTKAKLVDSPELCADTIVWLTQEKQSWLAGRYLSANWDVAELMARKEEILQGDKLKVKLVL.

Residues Val37, Asp95, Asn122, Arg156, Tyr188, Lys192, Val221, and Thr223 each coordinate NADP(+). Tyr188 serves as the catalytic Proton donor. Catalysis depends on Lys192, which acts as the Lowers pKa of active site Tyr.

It belongs to the short-chain dehydrogenases/reductases (SDR) family.

Its pathway is mycotoxin biosynthesis. Short chain dehydrogenase; part of the gene cluster that mediates the biosynthesis of the mycotoxin citrinin, a hepato-nephrotoxic compound to humans due to inhibition of respiration complex III. The pathway begins with the synthesis of a keto-aldehyde intermediate by the citrinin PKS (pksCT) from successive condensations of 4 malonyl-CoA units, presumably with a simple acetyl-CoA starter unit. Release of the keto-aldehyde intermediate is consistent with the presence of the C-terminal reductive release domain. Mp11 collaborates with pksCT by catalyzing the hydrolysis of ACP-bound acyl intermediates to free the ACP from stalled intermediates. Mpl2 then catalyzes the oxidation of the C-12 methyl of the ketone intermediate to an alcohol intermediate which is further oxidized by the oxidoreductase mpl7 to produce a bisaldehyde intermediate. The fourth catalytic step is catalyzed by the mpl4 aldehyde dehydrogenase. The final transformation is the reduction of C-3 by mpl6 to provide the chemically stable citrinin nucleus. The protein is Short chain dehydrogenase mpl6 of Monascus purpureus (Red mold).